Reading from the N-terminus, the 1038-residue chain is Subtilisin-like protease SBT6.1 (1038 aa).

The signal sequence occupies residues 1-30 (MKVLGEASSYPYRSCIIVVFLSVSLFWLRP). A propeptide spans 31–181 (STYHPQQQNL…TTLNWSRHLL (151 aa)) (removed in mature form). 4 N-linked (GlcNAc...) asparagine glycosylation sites follow: Asn44, Asn52, Asn171, and Asn175. Positions 175-473 (NWSRHLLAQK…VDLLESYEIL (299 aa)) constitute a Peptidase S8 domain. Topologically, residues 182–1000 (AQKTQVTSMF…IDMPFLVPTR (819 aa)) are lumenal. The Charge relay system role is filled by Asp212. An N-linked (GlcNAc...) asparagine glycan is attached at Asn230. The Charge relay system role is filled by His243. N-linked (GlcNAc...) asparagine glycosylation is present at Asn300. Catalysis depends on Ser409, which acts as the Charge relay system. Residues Asn513, Asn579, Asn902, and Asn954 are each glycosylated (N-linked (GlcNAc...) asparagine). Residues 1001–1021 (WIVLAGVVASGVLVLLSIWRI) form a helical membrane-spanning segment. Over 1022 to 1038 (RQKRGRRRRASGSNRLA) the chain is Cytoplasmic.

The protein belongs to the peptidase S8 family. In terms of assembly, interacts with PME1 and PME5. In terms of tissue distribution, expressed in the vasculature of roots, cotyledons and leaves.

The protein localises to the golgi apparatus membrane. In terms of biological role, serine protease that catalyzes the first step (site-1 cleavage) in the proteolytic activation of various factors, prior to site-2 cleavage. Part of a regulated intramembrane proteolysis (RIP) cascade. Cleaves BZIP17 and BZIP28 after the Arg-Arg-Ile-Leu (RRIL) motif. May cleave BZIP49 after the RRIL motif. Targets the membrane-associated BZIP17 factor, which functions as a stress sensor and transducer in a signaling pathway that resembles an ER stress response. Following salt stress, BZIP17 is cleaved by SBT6.1 (S1P) and S2P at the C-terminus and the N-terminal bZIP component is translocated to the nucleus, where it activates the expression of salt stress response genes. Cleaves the pectinesterases PME1 after the Arg-Arg-Leu-Met (RRLM) and Arg-Arg-Leu-Leu (RRLL) motifs, and PME5 after the Arg-Arg-Leu-Leu (RRLL) and Arg-Lys-Leu-Met (RKLM) motifs. This processing and C-terminus release occurs in the Golgi apparatus and is required for cell wall targeting of pectinesterases. Thus, SBT6.1 mediates the regulated release of mature pectinesterases from the Golgi. Cleaves the peptide growth factor RALF23 after the Arg-Arg-Ile-Leu (RRIL) motif. This processing is required for RALF23 function in the negative regulation of brassinolide (BL)-mediated signaling pathway (e.g. BL-induced hypocotyl elongation and branching limitation). The polypeptide is Subtilisin-like protease SBT6.1 (Arabidopsis thaliana (Mouse-ear cress)).